The following is a 768-amino-acid chain: MSALTSVSGFPRIGQNRELKKIIEAYWKGNTTLDEVRATAKELRAKHWKLQQAAGIDLIPSNDFSYYDQMLDTAILLNVIPQRYQRLAFENPEETLFAMGRGYQGEKGDVTALPMKKWFTTNYHYLVPEIDSATDIKLNSTKPFDEFNEAKALGITTKPVLIGPYTFLKLARNPQAEELDYDKGLVNAVAAVYAEVVAKFAELGVQWIQIDEPYLVLDKEPGDVELFKSLYAKILPAREGKVKVLLNTYFGHIADVYETVNLLGFDGIGLDLNEGKDENLAAVEKYGVAEKTTIFAGVINGRNIWRNNYAVSLGLVDALKQVTANVAVSTASSLLHVPFSTEGEDGLADDVRKHFAFAVQKLDELHEVAVLADASDDEKKASAELAANQALFDGTRVAADPAVAKRIASLTDADFVRQPARAERQKEQREALNLPLLPTTTIGSFPQTKEVRAERAKLRKGEITKAEYDEFMKNQIDACIKHQEEIGLDVLVHGEFERNDMVEYFGQNLNGFLFTKNAWVQSYGTRCVKPPIVWGDVSRANPITVEWSAYAQSRTDHVMKGMLTGPVTILNWSWPREDITHEQQTQQLALAIRDEVLDLEKAGIKVIQIDEAALREKLPLRKTDWHKKYLDWAIPAFRLVHSAVKPTTQIHTHMCYSEFNDIIKDIDAMDADVISFEASRGDLVVLDAIHDANFETEAGPGVYDIHSPRIPSEQEIEDRIYEILKKMDVEKVWINPDCGLKTRGNAETWPSLENLVAAAKAVRAKLAK.

5-methyltetrahydropteroyltri-L-glutamate contacts are provided by residues 17-20 (RELK) and Lys117. Residues 442–444 (IGS) and Glu495 each bind L-homocysteine. L-methionine is bound by residues 442 to 444 (IGS) and Glu495. 5-methyltetrahydropteroyltri-L-glutamate contacts are provided by residues 526-527 (RC) and Trp572. Asp610 contributes to the L-homocysteine binding site. Asp610 serves as a coordination point for L-methionine. Glu616 serves as a coordination point for 5-methyltetrahydropteroyltri-L-glutamate. Zn(2+)-binding residues include His653, Cys655, and Glu677. His706 functions as the Proton donor in the catalytic mechanism. Cys738 lines the Zn(2+) pocket.

This sequence belongs to the vitamin-B12 independent methionine synthase family. It depends on Zn(2+) as a cofactor.

It carries out the reaction 5-methyltetrahydropteroyltri-L-glutamate + L-homocysteine = tetrahydropteroyltri-L-glutamate + L-methionine. It participates in amino-acid biosynthesis; L-methionine biosynthesis via de novo pathway; L-methionine from L-homocysteine (MetE route): step 1/1. In terms of biological role, catalyzes the transfer of a methyl group from 5-methyltetrahydrofolate to homocysteine resulting in methionine formation. The protein is 5-methyltetrahydropteroyltriglutamate--homocysteine methyltransferase of Bifidobacterium adolescentis (strain ATCC 15703 / DSM 20083 / NCTC 11814 / E194a).